A 310-amino-acid polypeptide reads, in one-letter code: Protoheme IX farnesyltransferase (310 aa).

The next 9 membrane-spanning stretches (helical) occupy residues 37-57 (LITV…DVLL), 64-84 (LTLL…CYLN), 113-133 (ILAL…IVNH), 134-154 (VAAV…TMWL), 159-181 (TINT…AAVT), 186-208 (IDAW…ALAM), 215-237 (RAAG…QIVW), 257-277 (MLVM…GLKI), and 290-310 (MFFF…LVSL).

This sequence belongs to the UbiA prenyltransferase family. Protoheme IX farnesyltransferase subfamily. As to quaternary structure, interacts with CtaA.

The protein localises to the cell membrane. It catalyses the reaction heme b + (2E,6E)-farnesyl diphosphate + H2O = Fe(II)-heme o + diphosphate. The protein operates within porphyrin-containing compound metabolism; heme O biosynthesis; heme O from protoheme: step 1/1. Converts heme B (protoheme IX) to heme O by substitution of the vinyl group on carbon 2 of heme B porphyrin ring with a hydroxyethyl farnesyl side group. In Exiguobacterium sibiricum (strain DSM 17290 / CCUG 55495 / CIP 109462 / JCM 13490 / 255-15), this protein is Protoheme IX farnesyltransferase.